A 358-amino-acid chain; its full sequence is Reverse gyrase subunit A (358 aa).

One can recognise a Topo IA-type catalytic domain in the interval 1 to 351; that stretch reads MNATLRIRNR…KLYLELERVV (351 aa). The active-site O-(5'-phospho-DNA)-tyrosine intermediate is Tyr-78.

Belongs to the type IA topoisomerase family. As to quaternary structure, heterodimer of an RgyrA and RgyrB subunit. The topoisomerase domain is shared between the two subunits. The cofactor is Mg(2+).

The protein localises to the cytoplasm. Modifies the topological state of DNA by introducing positive supercoils in an ATP-dependent process; dATP also allows positive supercoiling. Increases the linking number in steps of +1. Only this subunit binds DNA, in isolation it does not hydrolyze ATP. Hydrolyzes ATP only in the presence of DNA. Transiently cleaves a single DNA strand and remains covalently bound to the 5' DNA end probably through a tyrosine residue. It changes linking number in steps of one, and nicks DNA preferentially at 5'-CNNN | 3'-sites with a strong preference for 4 pyrimidine residues. There are about 1000 heterodimers per cell. May be involved in rewinding the DNA strands in the regions of the chromosome that have opened up to allow transcription or replication. In terms of biological role, reverse gyrase activity is reconstituted after incubation at 80 degrees Celsius for 5 minutes, positive supercoiling requires ATP and Mg(2+). In the presence of ATP it binds and nicks substrate but does not make closed product. The protein is Reverse gyrase subunit A of Methanopyrus kandleri (strain AV19 / DSM 6324 / JCM 9639 / NBRC 100938).